The chain runs to 1318 residues: DNA-directed RNA polymerase subunit beta' (1318 aa).

Cysteine 60, cysteine 62, cysteine 75, and cysteine 78 together coordinate Zn(2+). The Mg(2+) site is built by aspartate 535, aspartate 537, and aspartate 539. Cysteine 890, cysteine 967, cysteine 974, and cysteine 977 together coordinate Zn(2+).

Belongs to the RNA polymerase beta' chain family. As to quaternary structure, the RNAP catalytic core consists of 2 alpha, 1 beta, 1 beta' and 1 omega subunit. When a sigma factor is associated with the core the holoenzyme is formed, which can initiate transcription. Mg(2+) is required as a cofactor. The cofactor is Zn(2+).

The enzyme catalyses RNA(n) + a ribonucleoside 5'-triphosphate = RNA(n+1) + diphosphate. Functionally, DNA-dependent RNA polymerase catalyzes the transcription of DNA into RNA using the four ribonucleoside triphosphates as substrates. This Rhodococcus erythropolis (strain PR4 / NBRC 100887) protein is DNA-directed RNA polymerase subunit beta'.